The chain runs to 150 residues: Ribosome maturation factor RimP (150 aa).

Belongs to the RimP family.

It localises to the cytoplasm. In terms of biological role, required for maturation of 30S ribosomal subunits. The chain is Ribosome maturation factor RimP from Thermotoga maritima (strain ATCC 43589 / DSM 3109 / JCM 10099 / NBRC 100826 / MSB8).